A 285-amino-acid chain; its full sequence is 2-dehydro-3-deoxyphosphooctonate aldolase (285 aa).

This sequence belongs to the KdsA family.

It is found in the cytoplasm. The catalysed reaction is D-arabinose 5-phosphate + phosphoenolpyruvate + H2O = 3-deoxy-alpha-D-manno-2-octulosonate-8-phosphate + phosphate. It functions in the pathway carbohydrate biosynthesis; 3-deoxy-D-manno-octulosonate biosynthesis; 3-deoxy-D-manno-octulosonate from D-ribulose 5-phosphate: step 2/3. Its pathway is bacterial outer membrane biogenesis; lipopolysaccharide biosynthesis. The polypeptide is 2-dehydro-3-deoxyphosphooctonate aldolase (Polaromonas naphthalenivorans (strain CJ2)).